A 69-amino-acid polypeptide reads, in one-letter code: Large ribosomal subunit protein uL29 (69 aa).

Belongs to the universal ribosomal protein uL29 family.

This is Large ribosomal subunit protein uL29 from Thermoanaerobacter pseudethanolicus (strain ATCC 33223 / 39E) (Clostridium thermohydrosulfuricum).